A 133-amino-acid polypeptide reads, in one-letter code: Small ribosomal subunit protein uS8 (133 aa).

Belongs to the universal ribosomal protein uS8 family. In terms of assembly, part of the 30S ribosomal subunit. Contacts proteins S5 and S12.

Its function is as follows. One of the primary rRNA binding proteins, it binds directly to 16S rRNA central domain where it helps coordinate assembly of the platform of the 30S subunit. The polypeptide is Small ribosomal subunit protein uS8 (Synechococcus sp. (strain CC9605)).